The sequence spans 846 residues: Selenocysteine insertion sequence-binding protein 2 (846 aa).

Basic and acidic residues-rich tracts occupy residues 151–165 (RRAWEEQKSSNRRAD) and 206–215 (PEFEFSRLDF). 5 disordered regions span residues 151-246 (RRAW…SNMS), 266-288 (TDHTDGAVTNNAATSSPSCTREL), 321-440 (TTSS…VPVQ), 448-467 (AALEKQQHAPHAKPSSRPVV), and 475-613 (VLSK…DSAT). At serine 220 the chain carries Phosphoserine. Composition is skewed to polar residues over residues 220-232 (SPKNSNLPETQKQ), 272-288 (AVTNNAATSSPSCTREL), and 321-342 (TTSSADAKNVSVTSEALSSDPS). The short motif at 370 to 380 (KKNKKKKEKSK) is the Nuclear localization signal element. The segment covering 417–428 (KLQSKQQAQNDF) has biased composition (polar residues). Basic and acidic residues predominate over residues 527–536 (ILKERQERMQ). Residues 542-551 (SAVSPTVASD) show a composition bias toward polar residues. Positions 666–687 (LVLGLREVLKHLKLRKLKCIII) are RNA-binding. The segment at 774–804 (RQEQAGEPGPQTPPSPPMQDPIQSTDEGTLA) is disordered. The segment covering 783–792 (PQTPPSPPMQ) has biased composition (pro residues).

Ubiquitous.

The protein resides in the cytoplasm. Its subcellular location is the nucleus. MRNA-binding protein that binds to the SECIS (selenocysteine insertion sequence) element present in the 3'-UTR of mRNAs encoding selenoproteins and facilitates the incorporation of the rare amino acid selenocysteine. Insertion of selenocysteine at UGA codons is mediated by SECISBP2 and EEFSEC: SECISBP2 (1) specifically binds the SECIS sequence once the 80S ribosome encounters an in-frame UGA codon and (2) contacts the RPS27A/eS31 of the 40S ribosome before ribosome stalling. (3) GTP-bound EEFSEC then delivers selenocysteinyl-tRNA(Sec) to the 80S ribosome and adopts a preaccommodated state conformation. (4) After GTP hydrolysis, EEFSEC dissociates from the assembly, selenocysteinyl-tRNA(Sec) accommodates, and peptide bond synthesis and selenoprotein elongation occur. The chain is Selenocysteine insertion sequence-binding protein 2 (Secisbp2) from Rattus norvegicus (Rat).